Reading from the N-terminus, the 266-residue chain is 4-diphosphocytidyl-2-C-methyl-D-erythritol kinase (266 aa).

Lys11 is an active-site residue. Residue 103–113 (PTFAGLGGGSS) coordinates ATP. The active site involves Asp145.

This sequence belongs to the GHMP kinase family. IspE subfamily.

The enzyme catalyses 4-CDP-2-C-methyl-D-erythritol + ATP = 4-CDP-2-C-methyl-D-erythritol 2-phosphate + ADP + H(+). The protein operates within isoprenoid biosynthesis; isopentenyl diphosphate biosynthesis via DXP pathway; isopentenyl diphosphate from 1-deoxy-D-xylulose 5-phosphate: step 3/6. In terms of biological role, catalyzes the phosphorylation of the position 2 hydroxy group of 4-diphosphocytidyl-2C-methyl-D-erythritol. This Sulfurimonas denitrificans (strain ATCC 33889 / DSM 1251) (Thiomicrospira denitrificans (strain ATCC 33889 / DSM 1251)) protein is 4-diphosphocytidyl-2-C-methyl-D-erythritol kinase.